An 863-amino-acid polypeptide reads, in one-letter code: DNA replication licensing factor mcm4 (863 aa).

Positions 1 to 121 are disordered; it reads MSSPTSTPSR…ARQRPDLGSA (121 aa). Polar residues-rich tracts occupy residues 54-64 and 78-99; these read SPSGDLQSPSG and SALQ…SSRV. The C4-type zinc-finger motif lies at 306–331; that stretch reads CQVCAFTTRVEIDRGRISEPSVCKHC. The region spanning 458 to 667 is the MCM domain; sequence IYERLASALA…YDRRLAHHLV (210 aa). The ATP site is built by Tyr-471, Arg-497, Lys-516, Ser-517, Asn-618, Arg-643, Arg-732, and Glu-735. The Arginine finger signature appears at 642 to 645; that stretch reads SRFD.

Belongs to the MCM family. Component of the mcm2-7 complex (RLF-M). The complex forms a toroidal hexameric ring with the proposed subunit order mcm2-mcm6-mcm4-mcm7-mcm3-mcm5. The heterodimer of mmcm3/mcm5 interacts with mcm4, mmcm6, mcm7 and weakly with mcm2. Component of the CMG helicase complex, composed of the mcm2-7 complex, the GINS complex and cdc45. In terms of processing, hyperphosphorylated during mitosis in a mechanism requiring cdc2-cyclin B and other kinases. Undergoes dephosphorylation after exiting mitosis, existing in a partially phosphorylated state in the cytosolic interphase mcm complex which associates with the pre-replication complexes (pre-Rcs). Complete dephosphorylation inactivates the mcm complex, preventing its binding to chromatin. Becomes actively phosphorylated during S phase once the mcm complex is assembled on the chromatin. This chromatin-associated phosphorylation occurs during the activation of the pre-Rcs and is independent of cdks. Phosphorylated by the cdc7-dbf4b complex.

The protein resides in the nucleus. It localises to the chromosome. The enzyme catalyses ATP + H2O = ADP + phosphate + H(+). In terms of biological role, acts as a component of the MCM2-7 complex (MCM complex) which is the replicative helicase essential for 'once per cell cycle' DNA replication initiation and elongation in eukaryotic cells. Core component of CDC45-MCM-GINS (CMG) helicase, the molecular machine that unwinds template DNA during replication, and around which the replisome is built. The active ATPase sites in the MCM2-7 ring are formed through the interaction surfaces of two neighboring subunits such that a critical structure of a conserved arginine finger motif is provided in trans relative to the ATP-binding site of the Walker A box of the adjacent subunit. The six ATPase active sites, however, are likely to contribute differentially to the complex helicase activity. The sequence is that of DNA replication licensing factor mcm4 from Xenopus tropicalis (Western clawed frog).